The primary structure comprises 1230 residues: Serine/threonine-protein kinase PDK1 (1230 aa).

A disordered region spans residues 1-277; it reads MASSHFGPAS…ASSGALKKHS (277 aa). Low complexity predominate over residues 34–50; that stretch reads SSSSSSRSTTTCSSTSS. Residues 62 to 76 show a composition bias toward polar residues; it reads ETSTAATSRSQLPSN. The segment covering 77-87 has biased composition (basic and acidic residues); sequence RHSENEAEHDT. Composition is skewed to polar residues over residues 107-117 and 140-175; these read PRSNRLGTSPQ and SKRQ…SSTI. Residues 185–202 are compositionally biased toward basic and acidic residues; that stretch reads PNDRLSHDRESHSAERPR. The segment covering 217–226 has biased composition (polar residues); the sequence is STPSSPTNSY. Basic and acidic residues predominate over residues 252–262; it reads ARDGDDRERRQ. In terms of domain architecture, Protein kinase spans 281–801; the sequence is WVLGEELGVG…ITFIKTHPFF (521 aa). ATP is bound by residues 291–293 and lysine 319; that span reads SYS. Disordered regions lie at residues 345–522 and 534–597; these read LSDP…RSGA and TLPP…KMSA. Composition is skewed to polar residues over residues 378–397 and 408–433; these read TASI…TVSN and IVTT…SPTA. 2 stretches are compositionally biased toward basic and acidic residues: residues 466–494 and 502–521; these read GGED…DNMT and VREE…ERSG. Residues 535–544 show a composition bias toward pro residues; the sequence is LPPPQIPSTP. A compositionally biased stretch (basic and acidic residues) spans 555–569; the sequence is DGHRTSRETPRDRPH. ATP is bound by residues 621–623 and glutamate 627; that span reads SLA. Aspartate 666 acts as the Proton acceptor in catalysis. Residues glutamate 670 and aspartate 684 each coordinate ATP. The segment covering 850–859 has biased composition (acidic residues); the sequence is EDEDGFEYDA. Disordered regions lie at residues 850–871, 907–955, 972–1035, and 1116–1152; these read EDED…GGAV, LGED…GGNR, GGGM…SDEA, and EADG…GGGH. Residues 927-942 are compositionally biased toward basic and acidic residues; it reads GKREKEVEKKKGEKAR. Composition is skewed to low complexity over residues 977 to 992, 1002 to 1030, and 1120 to 1137; these read GSAT…RTPG, RPGS…GASM, and DPAG…SHVE. Over residues 1138–1152 the composition is skewed to gly residues; that stretch reads SGGGGVGGGGRGGGH.

This sequence belongs to the protein kinase superfamily. AGC Ser/Thr protein kinase family. PDPK1 subfamily.

It catalyses the reaction L-seryl-[protein] + ATP = O-phospho-L-seryl-[protein] + ADP + H(+). The enzyme catalyses L-threonyl-[protein] + ATP = O-phospho-L-threonyl-[protein] + ADP + H(+). Its function is as follows. Serine/threonine-protein kinase that functions in the sphingolipid-mediated signaling pathway, regulating organization of the plasma membrane. May phosphorylate PKC1 to activate the cell integrity MAPK cascade during cell wall and membrane stress. May regulate sphingolipid metabolism upstream of YPK1. The sequence is that of Serine/threonine-protein kinase PDK1 from Cryptococcus neoformans var. grubii serotype A (strain H99 / ATCC 208821 / CBS 10515 / FGSC 9487) (Filobasidiella neoformans var. grubii).